The following is a 1558-amino-acid chain: ABC transporter NFT1 (1558 aa).

The Extracellular segment spans residues 1-29 (MIKNGTCPYWERDDLSECARREYIEFKFP). Residue asparagine 4 is glycosylated (N-linked (GlcNAc...) asparagine). The chain crosses the membrane as a helical span at residues 30 to 50 (LFILLTGMIYAFCKVFRAFYL). At 51-103 (RGKNHTNEAPEFEEQGNGNHEYARFSVLRLKSAWESRSFCNVNNRSTFDKFKK) the chain is on the cytoplasmic side. A helical transmembrane segment spans residues 104–124 (FIEGAFIVLQLTIHLYILSSM). Residues 125 to 130 (PMDNKK) are Extracellular-facing. The helical transmembrane segment at 131-151 (FFHQGFLVQMFLWILLLVVIT) threads the bilayer. At 152-169 (LRLISASQSFRWVLACKR) the chain is on the cytoplasmic side. Residues 170–190 (DLWAVSFYSYASLFTLSILPL) form a helical membrane-spanning segment. Topologically, residues 191 to 201 (RSVFIGKIKDK) are extracellular. A helical transmembrane segment spans residues 202–222 (IMVKYIISETFIDLALLLLLS). The Cytoplasmic portion of the chain corresponds to 223–302 (TSSIEGTRYS…SSKKGRLLPN (80 aa)). Residues 303 to 323 (IICYFKAVFISQLFLAFVSSF) traverse the membrane as a helical segment. Residues 311–621 (FISQLFLAFV…IASTVSLLIQ (311 aa)) enclose the ABC transmembrane type-1 1 domain. At 324 to 351 (LNFVPSLLMPRILSYVNDPKSKSWNLVS) the chain is on the extracellular side. The chain crosses the membrane as a helical span at residues 352–374 (LYVSSMLVSKIIATTCRGQGLFL). Residues 375 to 449 (GEKGTMQLRT…VMSIDAFKVS (75 aa)) are Cytoplasmic-facing. The disordered stretch occupies residues 410-434 (NASTSFEENPDSSEAEPRKKSSRKD). A compositionally biased stretch (basic and acidic residues) spans 424-434 (AEPRKKSSRKD). A helical membrane pass occupies residues 450 to 470 (EAMNTFYLACEAVFMTVTALM). Over 471-481 (ILYSLLGWSAF) the chain is Extracellular. A helical transmembrane segment spans residues 482–504 (AGTFALLAMIPLNFWCATFYGNY). Over 505 to 558 (QADQLILTDKRTSGISEALNSIRVIKLLAWENLFYQKIINVRDGEIRLLKKKAT) the chain is Cytoplasmic. Residues 559–579 (IFFLNHLIWFFGPTLVSAITF) form a helical membrane-spanning segment. The Extracellular portion of the chain corresponds to 580-584 (SVFIK). A helical membrane pass occupies residues 585–605 (FQNQTLTPTIAFTALSLFAIL). Over 606 to 953 (RTPMDQIAST…KFSAYKWLAD (348 aa)) the chain is Cytoplasmic. The 242-residue stretch at 651-892 (FGFEDASMEW…NEFLRESINN (242 aa)) folds into the ABC transporter 1 domain. 686–693 (GPTGSGKS) contacts ATP. The span at 892–901 (NDSKNTTHNQ) shows a compositional bias: polar residues. The interval 892 to 926 (NDSKNTTHNQIDLKRSTTSKKTKNGDPEGGNSQDE) is disordered. Residues 954-974 (YFGGLGVVFVFTSSSILIHGI) form a helical membrane-spanning segment. Residues 961–1251 (VFVFTSSSIL…IIKVFSSVEL (291 aa)) enclose the ABC transmembrane type-1 2 domain. The Extracellular portion of the chain corresponds to 975–1013 (TLSQGFWLRYWLDTGSSGSKSTWLYRIVEGHSNIYFLLT). A helical transmembrane segment spans residues 1014 to 1034 (YIIIGLVSSFLTSGKVWIAII). The Cytoplasmic portion of the chain corresponds to 1035 to 1082 (SGTNVTKKIFAKLLSSILYAKLRFHNVTPTGRIMNRFSKDMDIIDQQL). Residues 1083–1105 (IPNFEGLSYSVVVCLWIILLIGY) traverse the membrane as a helical segment. Over 1106–1109 (VTPQ) the chain is Extracellular. The chain crosses the membrane as a helical span at residues 1110–1132 (FLLFAIPLCALYYTVCTLYLRAS). Residues 1133-1199 (RELKRIDNIN…ATEWITYRVD (67 aa)) are Cytoplasmic-facing. The helical transmembrane segment at 1200–1220 (IIGTLVLFSSSVMIIMKASYL) threads the bilayer. The Extracellular segment spans residues 1221–1222 (DA). Residues 1223–1243 (GLAGILLSNAFSFTETAQWII) traverse the membrane as a helical segment. Over 1244 to 1558 (KVFSSVELLM…LAKVSFDNKR (315 aa)) the chain is Cytoplasmic. The ABC transporter 2 domain maps to 1285 to 1538 (VELKNLSLRY…RNTIFYRLCR (254 aa)). 1319-1326 (GRTGAGKS) contacts ATP.

It belongs to the ABC transporter superfamily. ABCC family. Conjugate transporter (TC 3.A.1.208) subfamily.

The protein localises to the membrane. The sequence is that of ABC transporter NFT1 (NFT1) from Saccharomyces cerevisiae (Baker's yeast).